Consider the following 2800-residue polypeptide: Probable serine/threonine-protein kinase roco5 (2800 aa).

Residues 1–61 (MEVIKKEKKD…EKEKDKEKDG (61 aa)) show a composition bias toward basic and acidic residues. Disordered regions lie at residues 1-92 (MEVI…SAQS), 123-225 (TTTT…SPVD), and 417-437 (GINSANSNNNNNNSGGGSSGI). Residues 77–86 (PTPPPPPPPS) are compositionally biased toward pro residues. 2 stretches are compositionally biased toward low complexity: residues 123 to 134 (TTTTTTTTSSNN) and 143 to 170 (NNNTSNNNINNNNKTSNTTGSNVSSSNN). The span at 176–190 (INVTSLDSGGNNNAS) shows a compositional bias: polar residues. Basic and acidic residues predominate over residues 194-218 (ISNEHSPKNRKEKEKEKDKDNKEDS). The 282-residue stretch at 227–508 (NRRKLVEGFM…VQVVKDIVNE (282 aa)) folds into the DH domain. Residues 417 to 429 (GINSANSNNNNNN) show a composition bias toward low complexity. A PH domain is found at 540 to 649 (KFLKEGILIE…WFQVLSQASL (110 aa)). LRR repeat units lie at residues 777–800 (NKSITHLTLSQNSINDPCAVALGD), 805–832 (NHSLIQMDLSENTIADKGLISLIDGILS), 834–856 (PSITVVILTQNQITDTGAKHISK), and 861–885 (NQTLNALFLEDNNITQSMGAEIIDQ). The interval 926 to 946 (KQLQVNQKSTTPSTSTSTTSS) is disordered. Residues 934–946 (STTPSTSTSTTSS) are compositionally biased toward low complexity. LRR repeat units lie at residues 971–984 (LNKLNMLSLDSRRI), 985–1007 (SDLKELYLDHNCISSIPVSILKE), 1008–1031 (LKNLQILDLSNNQLSSLPSEISEM), 1033–1056 (ELKLLNVSHNNLSSLPIELGTLCK), 1058–1077 (NHLDISFNFIETINVNSLSQ), 1078–1101 (LVNLKVLMMQRNYFNRLPIEIFTR), 1128–1151 (AIKATKLDLSDCGLSALPIEIGSI), 1152–1174 (SSLIELDLTNNRIKDLPPQIGKL), 1175–1197 (SSLQTLNLSNNAIESLPWQLSQL), and 1199–1222 (TLKVLNITGNPISFDGASNAKISI). The Roc domain maps to 1244-1464 (KEKPCMRMKL…NHIVKLGKAE (221 aa)). GTP is bound by residues 1257–1264 (GQENVGKT), 1348–1352 (DFAGQ), and 1407–1410 (THLD). The 132-residue stretch at 1473–1604 (RSYFQLENLI…KFEIVHPLPD (132 aa)) folds into the COR 1 domain. 2 disordered regions span residues 1605–1665 (PKAT…SLLN) and 1688–1711 (DQSTSPSNSTTPSPNTSSNNFSDS). Low complexity-rich tracts occupy residues 1610–1645 (SSSSSSPSTTQKSLNNSGSNLKSSGSAISTSSSSTT), 1653–1665 (RTNSTTNTTSLLN), and 1688–1707 (DQSTSPSNSTTPSPNTSSNN). The region spanning 1717-1790 (KSSTKHLVPI…VKEFWKNGLL (74 aa)) is the COR 2 domain. The span at 1886 to 2008 (SQQQHHQQQQ…LNPDSTSSSN (123 aa)) shows a compositional bias: low complexity. Disordered regions lie at residues 1886-2011 (SQQQ…NETS) and 2050-2070 (RNTNKPKINGTTGSGSSSSIV). Positions 2050–2059 (RNTNKPKING) are enriched in polar residues. A Protein kinase domain is found at 2175–2440 (LEIIEKVGEG…PTFIDIHSRL (266 aa)). Residues 2181 to 2189 (VGEGGFGIV) and Lys-2202 contribute to the ATP site. Asp-2300 acts as the Proton acceptor in catalysis. Composition is skewed to low complexity over residues 2452-2490 (TTTNSAKSTISTGFNSNSGATTTTKPKSSTISSGSGTTS), 2583-2654 (LKTP…SPIS), 2669-2685 (TTQTTSTPPTNQTPNPT), and 2694-2704 (SSLSSNSINKP). Disordered regions lie at residues 2452-2498 (TTTN…HPQL) and 2544-2800 (AGGN…AIPK). The segment covering 2705 to 2723 (PSKPLPTPGGVTSPPPPPT) has biased composition (pro residues). Over residues 2730-2756 (IKFNSISAGNKTIGQSSTLPSSTLKQF) the composition is skewed to polar residues. The segment covering 2757–2787 (TANNNTSPSGSSSLPNSTVSSPSSSFLLRPT) has biased composition (low complexity).

It belongs to the protein kinase superfamily. TKL Ser/Thr protein kinase family. ROCO subfamily.

It carries out the reaction L-seryl-[protein] + ATP = O-phospho-L-seryl-[protein] + ADP + H(+). It catalyses the reaction L-threonyl-[protein] + ATP = O-phospho-L-threonyl-[protein] + ADP + H(+). In terms of biological role, may act as a serine/threonine-protein kinase and guanine-nucleotide releasing factor. In Dictyostelium discoideum (Social amoeba), this protein is Probable serine/threonine-protein kinase roco5 (roco5).